We begin with the raw amino-acid sequence, 76 residues long: MQLVLAAKYIGAGISTIGLLGAGIGIAIVFSALIQGVSRNPSLKDTLFPFAILGFALSEATGLFCLMISFLLLYAV.

A run of 2 helical transmembrane segments spans residues 10–30 (IGAG…AIVF) and 52–72 (ILGF…SFLL).

It belongs to the ATPase C chain family. F-type ATPases have 2 components, CF(1) - the catalytic core - and CF(0) - the membrane proton channel. CF(1) has five subunits: alpha(3), beta(3), gamma(1), delta(1), epsilon(1). CF(0) has three main subunits: a, b and c.

The protein localises to the mitochondrion membrane. In terms of biological role, mitochondrial membrane ATP synthase (F(1)F(0) ATP synthase or Complex V) produces ATP from ADP in the presence of a proton gradient across the membrane which is generated by electron transport complexes of the respiratory chain. F-type ATPases consist of two structural domains, F(1) - containing the extramembraneous catalytic core and F(0) - containing the membrane proton channel, linked together by a central stalk and a peripheral stalk. During catalysis, ATP synthesis in the catalytic domain of F(1) is coupled via a rotary mechanism of the central stalk subunits to proton translocation. Part of the complex F(0) domain. A homomeric c-ring of probably 10 subunits is part of the complex rotary element. The polypeptide is ATP synthase subunit 9, mitochondrial (ATP9) (Kluyveromyces lactis (strain ATCC 8585 / CBS 2359 / DSM 70799 / NBRC 1267 / NRRL Y-1140 / WM37) (Yeast)).